The sequence spans 474 residues: PTS system N-acetylmuramic acid-specific EIIBC component (474 aa).

The 89-residue stretch at 1–89 (MAKEISSELL…SELLGEAPVQ (89 aa)) folds into the PTS EIIB type-1 domain. The Cytoplasmic portion of the chain corresponds to 1 to 123 (MAKEISSELL…LAKFATIFTP (123 aa)). Cys-29 serves as the catalytic Phosphocysteine intermediate; for EIIB activity. Positions 115 to 474 (AKFATIFTPL…LFGCRNVNLD (360 aa)) constitute a PTS EIIC type-1 domain. Residues 124 to 144 (LIPGFIAAGLLLGIATLIATV) traverse the membrane as a helical segment. The Periplasmic portion of the chain corresponds to 145-157 (MHVPADAQGTLPD). Residues 158–178 (ALNFMKVFSKGLFTFLVILVG) traverse the membrane as a helical segment. Over 179 to 180 (YN) the chain is Cytoplasmic. The helical transmembrane segment at 181–201 (AAQAFGGTGVNGAIIAALFLL) threads the bilayer. Residues 202-217 (GYNPAATTGYYAGFHD) are Periplasmic-facing. Residues 218 to 238 (FFGLPIDPRGNIIGVLIAAWA) form a helical membrane-spanning segment. Topologically, residues 239–260 (CARIEGMVRRFMPDDLDMLLTS) are cytoplasmic. The helical transmembrane segment at 261 to 281 (LITLLITATLAYLIIMPLGGW) threads the bilayer. At 282-301 (LFEGMSWLFMHLNSNPLGCA) the chain is on the periplasmic side. Residues 302–322 (VLAGLFLIAVVFGVHQGFIPV) traverse the membrane as a helical segment. The Cytoplasmic segment spans residues 323–334 (YLALMDSQGFNS). A helical transmembrane segment spans residues 335-355 (LFPILSMAGAGQVGAALALYW). Topologically, residues 356-368 (RAQPHSGLRSQVR) are periplasmic. Residues 369–389 (GAIIPGLLGVGEPLIYGVTLP) traverse the membrane as a helical segment. Over 390-393 (RMKP) the chain is Cytoplasmic. The helical transmembrane segment at 394–414 (FITACLGGAAGGLFIGLIAWW) threads the bilayer. Over 415 to 440 (GLPMGLNSAFGPSGLVALPLMTSAQG) the chain is Periplasmic. Residues 441–461 (ILPAMAIYAGGILVAWVCGFI) traverse the membrane as a helical segment. Over 462 to 474 (FTTLFGCRNVNLD) the chain is Cytoplasmic.

The protein localises to the cell inner membrane. The enzyme catalyses N-acetyl-beta-D-muramate(out) + N(pros)-phospho-L-histidyl-[protein] = N-acetyl-beta-D-muramate 6-phosphate(in) + L-histidyl-[protein]. Its function is as follows. The phosphoenolpyruvate-dependent sugar phosphotransferase system (sugar PTS), a major carbohydrate active transport system, catalyzes the phosphorylation of incoming sugar substrates concomitantly with their translocation across the cell membrane. This system is involved in N-acetylmuramic acid (MurNAc) transport, yielding cytoplasmic MurNAc-6-P. Is also able to take up anhydro-N-acetylmuramic acid (anhMurNAc), but cannot phosphorylate the carbon 6, probably because of the 1,6-anhydro ring. The sequence is that of PTS system N-acetylmuramic acid-specific EIIBC component (murP) from Shigella dysenteriae serotype 1 (strain Sd197).